The following is a 231-amino-acid chain: 5'-methylthioadenosine/S-adenosylhomocysteine nucleosidase (231 aa).

The Proton acceptor role is filled by E12. Residues G78, I153, and 174–175 (ME) contribute to the substrate site. D198 (proton donor) is an active-site residue.

It belongs to the PNP/UDP phosphorylase family. MtnN subfamily.

It catalyses the reaction S-adenosyl-L-homocysteine + H2O = S-(5-deoxy-D-ribos-5-yl)-L-homocysteine + adenine. It carries out the reaction S-methyl-5'-thioadenosine + H2O = 5-(methylsulfanyl)-D-ribose + adenine. The catalysed reaction is 5'-deoxyadenosine + H2O = 5-deoxy-D-ribose + adenine. It participates in amino-acid biosynthesis; L-methionine biosynthesis via salvage pathway; S-methyl-5-thio-alpha-D-ribose 1-phosphate from S-methyl-5'-thioadenosine (hydrolase route): step 1/2. Catalyzes the irreversible cleavage of the glycosidic bond in both 5'-methylthioadenosine (MTA) and S-adenosylhomocysteine (SAH/AdoHcy) to adenine and the corresponding thioribose, 5'-methylthioribose and S-ribosylhomocysteine, respectively. Also cleaves 5'-deoxyadenosine, a toxic by-product of radical S-adenosylmethionine (SAM) enzymes, into 5-deoxyribose and adenine. This chain is 5'-methylthioadenosine/S-adenosylhomocysteine nucleosidase, found in Shewanella putrefaciens (strain CN-32 / ATCC BAA-453).